The sequence spans 271 residues: Uridine-cytidine kinase 1-B (271 aa).

24–32 provides a ligand contact to ATP; that stretch reads GGTASGKST. Residues aspartate 81, tyrosine 109, histidine 114, arginine 163, arginine 172, and glutamine 180 each contribute to the substrate site. Aspartate 209 provides a ligand contact to ATP. Positions 240–271 are disordered; that stretch reads RSQKRTLPGQGDSGGLLLQGKRTHLESSSRPH. Low complexity predominate over residues 246–259; the sequence is LPGQGDSGGLLLQG. Over residues 262 to 271 the composition is skewed to basic and acidic residues; it reads THLESSSRPH.

This sequence belongs to the uridine kinase family.

It carries out the reaction uridine + ATP = UMP + ADP + H(+). It catalyses the reaction cytidine + ATP = CMP + ADP + H(+). It participates in pyrimidine metabolism; CTP biosynthesis via salvage pathway; CTP from cytidine: step 1/3. It functions in the pathway pyrimidine metabolism; UMP biosynthesis via salvage pathway; UMP from uridine: step 1/1. Functionally, phosphorylates uridine and cytidine to uridine monophosphate and cytidine monophosphate. Does not phosphorylate deoxyribonucleosides or purine ribonucleosides. Can use ATP or GTP as a phosphate donor. This is Uridine-cytidine kinase 1-B (uck1-b) from Xenopus laevis (African clawed frog).